The following is a 174-amino-acid chain: Cell division protein FtsL (174 aa).

The Cytoplasmic portion of the chain corresponds to 1–38 (MLAAPRELSYIPQPVVSSKQSPRSGLSNRRRESRARQK). The helical transmembrane segment at 39–59 (ILLLGLVLMGFVIGLSLTFLT) threads the bilayer. Residues 60–174 (MQVLIKGYKI…EPARQAGAGV (115 aa)) lie on the Extracellular side of the membrane.

The protein belongs to the FtsL family.

It is found in the cell membrane. In terms of biological role, essential cell division protein. This Moorella thermoacetica (strain ATCC 39073 / JCM 9320) protein is Cell division protein FtsL.